Here is a 650-residue protein sequence, read N- to C-terminus: ATP-dependent DNA helicase PIF1 (650 aa).

Residues 14–192 (MPSSTEAATD…ALEKRPMESQ (179 aa)) are PINT. S40 and S164 each carry phosphoserine. A disordered region spans residues 171 to 199 (LQRAAATKAPDSALEKRPMESQTSTEAPR). 237–244 (GSAGTGKS) lines the ATP pocket. The DNA-binding element occupies 586 to 605 (QAYVALSRARSLQGLRVLDF). The tract at residues 631–650 (LESQDDEEANSDLENMDPNL) is disordered. Over residues 633 to 650 (SQDDEEANSDLENMDPNL) the composition is skewed to acidic residues.

Belongs to the helicase family. PIF1 subfamily. As to quaternary structure, monomer. Interacts with telomerase. The cofactor is Mg(2+).

It is found in the nucleus. The protein localises to the mitochondrion. It carries out the reaction Couples ATP hydrolysis with the unwinding of duplex DNA at the replication fork by translocating in the 5'-3' direction. This creates two antiparallel DNA single strands (ssDNA). The leading ssDNA polymer is the template for DNA polymerase III holoenzyme which synthesizes a continuous strand.. The enzyme catalyses ATP + H2O = ADP + phosphate + H(+). Functionally, DNA-dependent ATPase and 5'-3' DNA helicase required for the maintenance of both mitochondrial and nuclear genome stability. Efficiently unwinds G-quadruplex (G4) DNA structures and forked RNA-DNA hybrids. Resolves G4 structures, preventing replication pausing and double-strand breaks (DSBs) at G4 motifs. Involved in the maintenance of telomeric DNA. Inhibits telomere elongation, de novo telomere formation and telomere addition to DSBs via catalytic inhibition of telomerase. Reduces the processivity of telomerase by displacing active telomerase from DNA ends. Releases telomerase by unwinding the short telomerase RNA/telomeric DNA hybrid that is the intermediate in the telomerase reaction. Possesses an intrinsic strand annealing activity. The polypeptide is ATP-dependent DNA helicase PIF1 (Mus musculus (Mouse)).